The following is a 25-amino-acid chain: Spinigerin (25 aa).

The protein resides in the secreted. Active against Gram-positive bacteria B.megaterium and M.luteus, Gram-negative bacteria E.coli SBS363 and D22, K.pneumoniae, S.typhimurium and P.aeruginosa, yeast C.albicans and filamentous fungi F.culmorum, N.crassa, N.hematococca and T.viridae. Inactive against Gram-positive bacteria B.subtilis, S.pyogenes, B.thuringiensis and S.aureus, Gram-negative bacteria E.cloacae and E.carotovora and filamentous fungus B.bassiana. In Pseudacanthotermes spiniger, this protein is Spinigerin.